A 218-amino-acid polypeptide reads, in one-letter code: Cell division protein SepF (218 aa).

Residues 20–81 (DDEYYDDRAP…GYRGGYADEP (62 aa)) form a disordered region. Basic and acidic residues predominate over residues 36-65 (PRFDDDYGRYDGRDYDDARSDSRGDLRGEP).

This sequence belongs to the SepF family. Homodimer. Interacts with FtsZ.

Its subcellular location is the cytoplasm. Its function is as follows. Cell division protein that is part of the divisome complex and is recruited early to the Z-ring. Probably stimulates Z-ring formation, perhaps through the cross-linking of FtsZ protofilaments. Its function overlaps with FtsA. This Mycobacterium bovis (strain ATCC BAA-935 / AF2122/97) protein is Cell division protein SepF.